The following is a 401-amino-acid chain: S-adenosylmethionine synthase (401 aa).

Histidine 15 is an ATP binding site. Position 17 (aspartate 17) interacts with Mg(2+). Residue glutamate 43 coordinates K(+). The L-methionine site is built by glutamate 56 and glutamine 99. Residues 99–109 form a flexible loop region; it reads QSPEIGAGVDT. Residues 101–132 form a disordered region; sequence PEIGAGVDTSHEVRGSSSTDEDDRQGAGDQGL. ATP contacts are provided by residues 174 to 176, aspartate 254, 260 to 261, alanine 277, and lysine 281; these read DGK and RK. Position 254 (aspartate 254) interacts with L-methionine. Lysine 285 contributes to the L-methionine binding site.

The protein belongs to the AdoMet synthase family. In terms of assembly, homotetramer; dimer of dimers. It depends on Mg(2+) as a cofactor. K(+) serves as cofactor.

The protein localises to the cytoplasm. The enzyme catalyses L-methionine + ATP + H2O = S-adenosyl-L-methionine + phosphate + diphosphate. Its pathway is amino-acid biosynthesis; S-adenosyl-L-methionine biosynthesis; S-adenosyl-L-methionine from L-methionine: step 1/1. Functionally, catalyzes the formation of S-adenosylmethionine (AdoMet) from methionine and ATP. The overall synthetic reaction is composed of two sequential steps, AdoMet formation and the subsequent tripolyphosphate hydrolysis which occurs prior to release of AdoMet from the enzyme. In Corynebacterium urealyticum (strain ATCC 43042 / DSM 7109), this protein is S-adenosylmethionine synthase.